Consider the following 605-residue polypeptide: Kelch-like protein 26 (605 aa).

The BTB domain maps to 53-120 (LDVVLAIDNE…AYSSEVTLDL (68 aa)). One can recognise a BACK domain in the interval 155-256 (CLNIGQMATT…RSSELVDSVQ (102 aa)). Kelch repeat units follow at residues 300–351 (SLIT…VLDN), 352–403 (FVYV…VLDG), 404–450 (QLYA…TCGD), 452–498 (LYIS…SANN), 499–549 (RIYA…LLDK), and 551–598 (IYIV…PIIL).

Functionally, may play a role in endo(sarco)plasmic reticulum (ER/SR) mitochondrial signaling. May be part of the ubiquitin-proteasome system (UPS) and affect ubiquitination and degradation of target substrates. In Danio rerio (Zebrafish), this protein is Kelch-like protein 26 (klhl26).